Reading from the N-terminus, the 112-residue chain is T cell receptor alpha variable 7 (112 aa).

Residues 1–21 (MEKMRRPVLIIFCLCLGWANG) form the signal peptide. One can recognise an Ig-like domain in the interval 22–112 (ENQVEHSPHF…DSATYFCAVD (91 aa)). C44 and C109 are disulfide-bonded. Residues N84 and N90 are each glycosylated (N-linked (GlcNAc...) asparagine).

As to quaternary structure, alpha-beta TR is a heterodimer composed of an alpha and beta chain; disulfide-linked. The alpha-beta TR is associated with the transmembrane signaling CD3 coreceptor proteins to form the TR-CD3 (TcR or TCR). The assembly of alpha-beta TR heterodimers with CD3 occurs in the endoplasmic reticulum where a single alpha-beta TR heterodimer associates with one CD3D-CD3E heterodimer, one CD3G-CD3E heterodimer and one CD247 homodimer forming a stable octameric structure. CD3D-CD3E and CD3G-CD3E heterodimers preferentially associate with TR alpha and TR beta chains, respectively. The association of the CD247 homodimer is the last step of TcR assembly in the endoplasmic reticulum and is required for transport to the cell surface.

It localises to the cell membrane. In terms of biological role, v region of the variable domain of T cell receptor (TR) alpha chain that participates in the antigen recognition. Alpha-beta T cell receptors are antigen specific receptors which are essential to the immune response and are present on the cell surface of T lymphocytes. Recognize peptide-major histocompatibility (MH) (pMH) complexes that are displayed by antigen presenting cells (APC), a prerequisite for efficient T cell adaptive immunity against pathogens. Binding of alpha-beta TR to pMH complex initiates TR-CD3 clustering on the cell surface and intracellular activation of LCK that phosphorylates the ITAM motifs of CD3G, CD3D, CD3E and CD247 enabling the recruitment of ZAP70. In turn ZAP70 phosphorylates LAT, which recruits numerous signaling molecules to form the LAT signalosome. The LAT signalosome propagates signal branching to three major signaling pathways, the calcium, the mitogen-activated protein kinase (MAPK) kinase and the nuclear factor NF-kappa-B (NF-kB) pathways, leading to the mobilization of transcription factors that are critical for gene expression and essential for T cell growth and differentiation. The T cell repertoire is generated in the thymus, by V-(D)-J rearrangement. This repertoire is then shaped by intrathymic selection events to generate a peripheral T cell pool of self-MH restricted, non-autoaggressive T cells. Post-thymic interaction of alpha-beta TR with the pMH complexes shapes TR structural and functional avidity. This chain is T cell receptor alpha variable 7, found in Homo sapiens (Human).